An 868-amino-acid polypeptide reads, in one-letter code: LPS-assembly protein LptD (868 aa).

The N-terminal stretch at 1–24 is a signal peptide; the sequence is MLKGIHKYLLMCFGTVLFTVQANA.

The protein belongs to the LptD family. Component of the lipopolysaccharide transport and assembly complex. Interacts with LptE and LptA.

Its subcellular location is the cell outer membrane. Functionally, together with LptE, is involved in the assembly of lipopolysaccharide (LPS) at the surface of the outer membrane. This Francisella tularensis subsp. holarctica (strain LVS) protein is LPS-assembly protein LptD.